An 835-amino-acid polypeptide reads, in one-letter code: Protein translocase subunit SecA (835 aa).

ATP is bound by residues Gln85, 103–107, and Asp492; that span reads GEGKT. The Zn(2+) site is built by Cys819, Cys821, Cys830, and Cys831.

Belongs to the SecA family. As to quaternary structure, monomer and homodimer. Part of the essential Sec protein translocation apparatus which comprises SecA, SecYEG and auxiliary proteins SecDF. Other proteins may also be involved. Requires Zn(2+) as cofactor.

Its subcellular location is the cell membrane. The protein localises to the cytoplasm. The catalysed reaction is ATP + H2O + cellular proteinSide 1 = ADP + phosphate + cellular proteinSide 2.. Its function is as follows. Part of the Sec protein translocase complex. Interacts with the SecYEG preprotein conducting channel. Has a central role in coupling the hydrolysis of ATP to the transfer of proteins into and across the cell membrane, serving as an ATP-driven molecular motor driving the stepwise translocation of polypeptide chains across the membrane. The sequence is that of Protein translocase subunit SecA from Clostridium botulinum (strain Kyoto / Type A2).